Consider the following 421-residue polypeptide: RNA exonuclease 4 (421 aa).

Disordered regions lie at residues 1-51 (MAKA…ETKK) and 79-179 (ENQA…QPPK). Polar residues predominate over residues 11 to 24 (SPCSGSLGKTANTP). A compositionally biased stretch (basic residues) spans 25-36 (KQKRKQKQRKFW). Basic and acidic residues-rich tracts occupy residues 92-107 (PKKD…EESV), 140-149 (AAEKSDEVSK), and 161-170 (DTEHQGKKPQ). Residues 234-385 (TVAMDCEMVG…QDAQAAMRLY (152 aa)) enclose the Exonuclease domain.

It belongs to the REXO4 family.

It is found in the nucleus. The chain is RNA exonuclease 4 (rexo4) from Xenopus laevis (African clawed frog).